Consider the following 502-residue polypeptide: ATP synthase subunit alpha (502 aa).

Residue 169–176 participates in ATP binding; that stretch reads GDRQTGKT.

It belongs to the ATPase alpha/beta chains family. In terms of assembly, F-type ATPases have 2 components, CF(1) - the catalytic core - and CF(0) - the membrane proton channel. CF(1) has five subunits: alpha(3), beta(3), gamma(1), delta(1), epsilon(1). CF(0) has three main subunits: a(1), b(2) and c(9-12). The alpha and beta chains form an alternating ring which encloses part of the gamma chain. CF(1) is attached to CF(0) by a central stalk formed by the gamma and epsilon chains, while a peripheral stalk is formed by the delta and b chains.

The protein resides in the cell inner membrane. It catalyses the reaction ATP + H2O + 4 H(+)(in) = ADP + phosphate + 5 H(+)(out). In terms of biological role, produces ATP from ADP in the presence of a proton gradient across the membrane. The alpha chain is a regulatory subunit. The polypeptide is ATP synthase subunit alpha (Pelobacter propionicus (strain DSM 2379 / NBRC 103807 / OttBd1)).